The following is a 259-amino-acid chain: Thiamine thiazole synthase (259 aa).

Residues A33, E52–R53, G60, V124, and H152–D154 contribute to the NAD(+) site. 2 residues coordinate Fe cation: D154 and H169. Residue M219 coordinates NAD(+). A glycine-binding site is contributed by R229.

This sequence belongs to the THI4 family. As to quaternary structure, homooctamer; tetramer of dimers. The cofactor is Fe(2+).

The catalysed reaction is hydrogen sulfide + glycine + NAD(+) = ADP-5-ethyl-4-methylthiazole-2-carboxylate + nicotinamide + 3 H2O + H(+). The protein operates within cofactor biosynthesis; thiamine diphosphate biosynthesis. Its function is as follows. Involved in the biosynthesis of the thiazole moiety of thiamine. Catalyzes the conversion of NAD and glycine to adenosine diphosphate 5-(2-hydroxyethyl)-4-methylthiazole-2-carboxylate (ADT), an adenylated thiazole intermediate, using free sulfide as a source of sulfur. The sequence is that of Thiamine thiazole synthase from Pyrobaculum neutrophilum (strain DSM 2338 / JCM 9278 / NBRC 100436 / V24Sta) (Thermoproteus neutrophilus).